We begin with the raw amino-acid sequence, 189 residues long: Der GTPase-activating protein YihI (189 aa).

The disordered stretch occupies residues 1–81; that stretch reads MARKKKTRRV…ALAKKDPRLG (81 aa). 2 stretches are compositionally biased toward basic and acidic residues: residues 9–27 and 35–46; these read RVSD…ELPK and TRYELDAKARED. A compositionally biased stretch (polar residues) spans 60 to 71; the sequence is RHSATENNNNHQ.

This sequence belongs to the YihI family. In terms of assembly, interacts with Der.

Functionally, a GTPase-activating protein (GAP) that modifies Der/EngA GTPase function. May play a role in ribosome biogenesis. The sequence is that of Der GTPase-activating protein YihI from Pasteurella multocida (strain Pm70).